A 466-amino-acid chain; its full sequence is FVGFKAGVKEYKLTYYTPDYETKDTDILAAFRVTPQPGVPPEEAGAAVAAESSTGTWTAVWTDGLTSLDRYKGRCYHIEPVAGEENQYICYVAYPLDLFEEGSVTNMFTSIVGNVFGFKALRALRLEDLRIPPAYSKTFQGPPHGIQVERDKLNKYGRPLLGCTIKPKLGLSAKNYGRACYECLRGGLDFTKDDENVNSQPFMRWRDRFLFCAEAIYKAQAETGEIKGHYLNATAGTCEEMMKRAVFARELGVPIVMHDYLTGGFTANTSLAHYCRDNGLLLHIHRAMHAVIDRQKNHGMHFRVLAKALRLSGGDHIHAGTVVGKLEGERDITLGFVDLLRDDFIEKDRSRGIYFTQDWVSLPGVIPVASGGIHVWHMPALTEIFGDDSVLQFGGGTLGHPWGNAPGAVANRVALEACVQARNEGRDLAREGNEIIREASKWSPELAAACEVWKEIKFEFEAMDTL.

K5 carries the N6,N6,N6-trimethyllysine modification. N114 and T164 together coordinate substrate. K166 functions as the Proton acceptor in the catalytic mechanism. K168 provides a ligand contact to substrate. Mg(2+)-binding residues include K192, D194, and E195. K192 is modified (N6-carboxylysine). Residue H285 is the Proton acceptor of the active site. Residues R286, H318, and S370 each contribute to the substrate site.

Belongs to the RuBisCO large chain family. Type I subfamily. Heterohexadecamer of 8 large chains and 8 small chains; disulfide-linked. The disulfide link is formed within the large subunit homodimers. The cofactor is Mg(2+). In terms of processing, the disulfide bond which can form in the large chain dimeric partners within the hexadecamer appears to be associated with oxidative stress and protein turnover.

Its subcellular location is the plastid. It localises to the chloroplast. The catalysed reaction is 2 (2R)-3-phosphoglycerate + 2 H(+) = D-ribulose 1,5-bisphosphate + CO2 + H2O. It carries out the reaction D-ribulose 1,5-bisphosphate + O2 = 2-phosphoglycolate + (2R)-3-phosphoglycerate + 2 H(+). In terms of biological role, ruBisCO catalyzes two reactions: the carboxylation of D-ribulose 1,5-bisphosphate, the primary event in carbon dioxide fixation, as well as the oxidative fragmentation of the pentose substrate in the photorespiration process. Both reactions occur simultaneously and in competition at the same active site. This chain is Ribulose bisphosphate carboxylase large chain, found in Bixa orellana (Lipstick tree).